We begin with the raw amino-acid sequence, 444 residues long: N-succinylarginine dihydrolase (444 aa).

Residues 19 to 28, Asn110, and 137 to 138 contribute to the substrate site; these read SGLSVGNIAS and HR. Glu174 is a catalytic residue. Arg214 serves as a coordination point for substrate. His250 is an active-site residue. Positions 252 and 362 each coordinate substrate. Cys368 (nucleophile) is an active-site residue.

This sequence belongs to the succinylarginine dihydrolase family. Homodimer.

The enzyme catalyses N(2)-succinyl-L-arginine + 2 H2O + 2 H(+) = N(2)-succinyl-L-ornithine + 2 NH4(+) + CO2. The protein operates within amino-acid degradation; L-arginine degradation via AST pathway; L-glutamate and succinate from L-arginine: step 2/5. In terms of biological role, catalyzes the hydrolysis of N(2)-succinylarginine into N(2)-succinylornithine, ammonia and CO(2). The protein is N-succinylarginine dihydrolase of Aliivibrio fischeri (strain MJ11) (Vibrio fischeri).